A 543-amino-acid polypeptide reads, in one-letter code: Chaperonin GroEL 2 (543 aa).

ATP is bound by residues 29 to 32 (TLGP), 86 to 90 (DGTTT), glycine 413, 479 to 481 (NAA), and aspartate 495.

It belongs to the chaperonin (HSP60) family. Forms a cylinder of 14 subunits composed of two heptameric rings stacked back-to-back. Interacts with the co-chaperonin GroES.

Its subcellular location is the cytoplasm. The catalysed reaction is ATP + H2O + a folded polypeptide = ADP + phosphate + an unfolded polypeptide.. Functionally, together with its co-chaperonin GroES, plays an essential role in assisting protein folding. The GroEL-GroES system forms a nano-cage that allows encapsulation of the non-native substrate proteins and provides a physical environment optimized to promote and accelerate protein folding. This chain is Chaperonin GroEL 2, found in Synechococcus sp. (strain CC9311).